A 379-amino-acid chain; its full sequence is tRNA (guanine(26)-N(2))-dimethyltransferase (379 aa).

A disordered region spans residues 1–26 (MECREITEGSTTFTAPVQDETTQFPP). One can recognise a Trm1 methyltransferase domain in the interval 4–369 (REITEGSTTF…APLPLIEEKI (366 aa)). Over residues 8 to 25 (EGSTTFTAPVQDETTQFP) the composition is skewed to polar residues. Residues R41, R66, D82, D108, and A109 each contribute to the S-adenosyl-L-methionine site. Residues C237, C240, C257, and C260 each coordinate Zn(2+).

This sequence belongs to the class I-like SAM-binding methyltransferase superfamily. Trm1 family.

The catalysed reaction is guanosine(26) in tRNA + 2 S-adenosyl-L-methionine = N(2)-dimethylguanosine(26) in tRNA + 2 S-adenosyl-L-homocysteine + 2 H(+). Functionally, dimethylates a single guanine residue at position 26 of a number of tRNAs using S-adenosyl-L-methionine as donor of the methyl groups. The sequence is that of tRNA (guanine(26)-N(2))-dimethyltransferase from Methanocorpusculum labreanum (strain ATCC 43576 / DSM 4855 / Z).